We begin with the raw amino-acid sequence, 389 residues long: Tubby-like F-box protein 11 (389 aa).

The F-box domain maps to 36–82; the sequence is DYRWSEIPEELLREILIRVEAADGGGWPSRRSVVACAGVCRGWRLLM. The tract at residues 250–289 is disordered; that stretch reads STMEPQGVASEPSEFPLLGTRSTLSRSQSKPLRSSSSHLK. Residues 273–286 are compositionally biased toward low complexity; it reads LSRSQSKPLRSSSS.

The protein belongs to the TUB family. In terms of tissue distribution, ubiquitous.

This chain is Tubby-like F-box protein 11, found in Arabidopsis thaliana (Mouse-ear cress).